The chain runs to 179 residues: Small capsomere-interacting protein (179 aa).

Residues 107-179 form a disordered region; it reads IPLPPETGEF…QAPGTKGKKQ (73 aa). Residues 118-171 are compositionally biased toward low complexity; the sequence is TGGTSSSVRSASGASGGAASTAASGGSASAAASGASGGSASQSDVSSRSRSQQA.

The protein belongs to the herpesviridae small capsomere-interacting protein family. As to quaternary structure, interacts with the major capsid protein/MCP.

It localises to the virion. The protein localises to the host nucleus. Its function is as follows. Participates in the assembly of the infectious particles by decorating the outer surface of the capsid shell and thus forming a layer between the capsid and the tegument. Complexes composed of the major capsid protein and small capsomere-interacting protein/SCP assemble together in the host cytoplasm and are translocated to the nucleus, where they accumulate and participate in capsid assembly. This Equine herpesvirus 2 (strain 86/87) (EHV-2) protein is Small capsomere-interacting protein.